Consider the following 89-residue polypeptide: Elongation factor 1-beta (89 aa).

This sequence belongs to the EF-1-beta/EF-1-delta family.

Promotes the exchange of GDP for GTP in EF-1-alpha/GDP, thus allowing the regeneration of EF-1-alpha/GTP that could then be used to form the ternary complex EF-1-alpha/GTP/AAtRNA. The polypeptide is Elongation factor 1-beta (ef1b) (Methanothermobacter thermautotrophicus (strain ATCC 29096 / DSM 1053 / JCM 10044 / NBRC 100330 / Delta H) (Methanobacterium thermoautotrophicum)).